The primary structure comprises 557 residues: Dihydroxy-acid dehydratase (557 aa).

Cysteine 49 contacts [2Fe-2S] cluster. Aspartate 81 is a Mg(2+) binding site. Residue cysteine 122 participates in [2Fe-2S] cluster binding. Aspartate 123 and lysine 124 together coordinate Mg(2+). Lysine 124 is subject to N6-carboxylysine. [2Fe-2S] cluster is bound at residue cysteine 194. Glutamate 446 is a Mg(2+) binding site. The Proton acceptor role is filled by serine 472.

The protein belongs to the IlvD/Edd family. In terms of assembly, homodimer. The cofactor is [2Fe-2S] cluster. It depends on Mg(2+) as a cofactor.

It carries out the reaction (2R)-2,3-dihydroxy-3-methylbutanoate = 3-methyl-2-oxobutanoate + H2O. The catalysed reaction is (2R,3R)-2,3-dihydroxy-3-methylpentanoate = (S)-3-methyl-2-oxopentanoate + H2O. It functions in the pathway amino-acid biosynthesis; L-isoleucine biosynthesis; L-isoleucine from 2-oxobutanoate: step 3/4. The protein operates within amino-acid biosynthesis; L-valine biosynthesis; L-valine from pyruvate: step 3/4. Its function is as follows. Functions in the biosynthesis of branched-chain amino acids. Catalyzes the dehydration of (2R,3R)-2,3-dihydroxy-3-methylpentanoate (2,3-dihydroxy-3-methylvalerate) into 2-oxo-3-methylpentanoate (2-oxo-3-methylvalerate) and of (2R)-2,3-dihydroxy-3-methylbutanoate (2,3-dihydroxyisovalerate) into 2-oxo-3-methylbutanoate (2-oxoisovalerate), the penultimate precursor to L-isoleucine and L-valine, respectively. This Prochlorococcus marinus (strain MIT 9301) protein is Dihydroxy-acid dehydratase.